The primary structure comprises 245 residues: Mitochondrial import inner membrane translocase subunit Tim21 (245 aa).

Residues 1–18 (MICAFLRVVRHAEKLHGS) constitute a mitochondrion transit peptide. Residues 64-97 (FWTQGPDPRKAKEDSSKQVSINRNQREETGVSTS) are disordered. Over residues 70 to 79 (DPRKAKEDSS) the composition is skewed to basic and acidic residues. Residues 108–128 (TYLIVVLFGVSITGSLLYTIF) traverse the membrane as a helical segment.

The protein belongs to the TIM21 family. Component of the TIM23 complex. Component of the MITRAC (mitochondrial translation regulation assembly intermediate of cytochrome c oxidase complex) complex, the core components of this complex being COA3/MITRAC12 and COX14. Interacts with COA3 and MT-CO1/COX1.

It localises to the mitochondrion membrane. Functionally, participates in the translocation of transit peptide-containing proteins across the mitochondrial inner membrane. Also required for assembly of mitochondrial respiratory chain complex I and complex IV as component of the MITRAC (mitochondrial translation regulation assembly intermediate of cytochrome c oxidase complex) complex. Probably shuttles between the presequence translocase and respiratory-chain assembly intermediates in a process that promotes incorporation of early nuclear-encoded subunits into these complexes. The sequence is that of Mitochondrial import inner membrane translocase subunit Tim21 (Timm21) from Rattus norvegicus (Rat).